We begin with the raw amino-acid sequence, 248 residues long: MQQHPMPDSLPGAAFWEALGWTPEPAQLGQLKALQDLLRSWNSRVNLTRLVEGDDYWINQVFDSLWPLQTELRSPHQSRLAIDVGTGGGFPGLAVAIAMPGARMTLLDSVGRKTAAVQAMVNDLGLSDRVSVRTDRIESAGHDRTLRGGFDLAMARAVAAAPVVAEYLVPLLKPDGNALLYRGQWGDTDLRQLKRALVPLNAQLSSSQHCQLPAERGVRHLIRLQPVSPCPRQFPRAVGVPSRQPLGG.

S-adenosyl-L-methionine is bound by residues Gly85, Phe90, Ile137–Glu138, and Arg156.

Belongs to the methyltransferase superfamily. RNA methyltransferase RsmG family.

It localises to the cytoplasm. Specifically methylates the N7 position of a guanine in 16S rRNA. The chain is Ribosomal RNA small subunit methyltransferase G from Parasynechococcus marenigrum (strain WH8102).